Reading from the N-terminus, the 122-residue chain is Large ribosomal subunit protein bL12 (122 aa).

Belongs to the bacterial ribosomal protein bL12 family. As to quaternary structure, homodimer. Part of the ribosomal stalk of the 50S ribosomal subunit. Forms a multimeric L10(L12)X complex, where L10 forms an elongated spine to which 2 to 4 L12 dimers bind in a sequential fashion. Binds GTP-bound translation factors.

Functionally, forms part of the ribosomal stalk which helps the ribosome interact with GTP-bound translation factors. Is thus essential for accurate translation. In Enterococcus faecalis (strain ATCC 700802 / V583), this protein is Large ribosomal subunit protein bL12.